The following is a 437-amino-acid chain: Glutamate-1-semialdehyde 2,1-aminomutase 1 (437 aa).

Lys268 carries the post-translational modification N6-(pyridoxal phosphate)lysine.

This sequence belongs to the class-III pyridoxal-phosphate-dependent aminotransferase family. HemL subfamily. As to quaternary structure, homodimer. It depends on pyridoxal 5'-phosphate as a cofactor.

It is found in the cytoplasm. It carries out the reaction (S)-4-amino-5-oxopentanoate = 5-aminolevulinate. It participates in porphyrin-containing compound metabolism; protoporphyrin-IX biosynthesis; 5-aminolevulinate from L-glutamyl-tRNA(Glu): step 2/2. This is Glutamate-1-semialdehyde 2,1-aminomutase 1 from Halalkalibacterium halodurans (strain ATCC BAA-125 / DSM 18197 / FERM 7344 / JCM 9153 / C-125) (Bacillus halodurans).